A 139-amino-acid polypeptide reads, in one-letter code: Iron-sulfur cluster assembly 1 homolog, mitochondrial (139 aa).

Cys52, Cys117, and Cys119 together coordinate Fe cation.

Belongs to the HesB/IscA family.

Its subcellular location is the mitochondrion. Its function is as follows. Involved in the assembly of mitochondrial iron-sulfur proteins. Probably involved in the binding of an intermediate of Fe/S cluster assembly. This chain is Iron-sulfur cluster assembly 1 homolog, mitochondrial (isca1), found in Dictyostelium discoideum (Social amoeba).